The primary structure comprises 79 residues: Protein NOI4 (79 aa).

The segment at 31–68 (KARDEKKTGGKPGSPGKSSEGHVKSGGGDPSKPQPKKW) is disordered. Position 44 is a phosphoserine (Ser-44).

Belongs to the RIN4 family. Proteolytic cleaved by P.syringae pv tomato AvrRpt2 after Gly-12; this cleavage is critical for subsequent proteasome-dependent elimination.

This chain is Protein NOI4, found in Arabidopsis thaliana (Mouse-ear cress).